We begin with the raw amino-acid sequence, 194 residues long: Leucyl/phenylalanyl-tRNA--protein transferase (194 aa).

The protein belongs to the L/F-transferase family.

The protein resides in the cytoplasm. It carries out the reaction N-terminal L-lysyl-[protein] + L-leucyl-tRNA(Leu) = N-terminal L-leucyl-L-lysyl-[protein] + tRNA(Leu) + H(+). The enzyme catalyses N-terminal L-arginyl-[protein] + L-leucyl-tRNA(Leu) = N-terminal L-leucyl-L-arginyl-[protein] + tRNA(Leu) + H(+). It catalyses the reaction L-phenylalanyl-tRNA(Phe) + an N-terminal L-alpha-aminoacyl-[protein] = an N-terminal L-phenylalanyl-L-alpha-aminoacyl-[protein] + tRNA(Phe). Its function is as follows. Functions in the N-end rule pathway of protein degradation where it conjugates Leu, Phe and, less efficiently, Met from aminoacyl-tRNAs to the N-termini of proteins containing an N-terminal arginine or lysine. This is Leucyl/phenylalanyl-tRNA--protein transferase from Chlorobaculum parvum (strain DSM 263 / NCIMB 8327) (Chlorobium vibrioforme subsp. thiosulfatophilum).